The sequence spans 326 residues: Vitamin B12 import system permease protein BtuC (326 aa).

Transmembrane regions (helical) follow at residues 15–35 (WLLSLSLLVLLATLLSLCAGE), 61–81 (LAVLLVGAALALSGAVMQALF), 88–108 (PGLLGVSNGAGVGLIAAVLLG), 112–132 (LPGWALGLCAIAGALIITLIL), 146–166 (LLAGVALGIICSALMTWAIYF), 184–204 (GGVDWQQSWLMIALIPVLIWI), 240–260 (GWMVGVSVAMAGAIGFIGLVI), 274–294 (VLLPGCALAGAIALLLADVVA), and 302–322 (ELPIGVVTATLGAPVFIWLLL).

This sequence belongs to the binding-protein-dependent transport system permease family. FecCD subfamily. In terms of assembly, the complex is composed of two ATP-binding proteins (BtuD), two transmembrane proteins (BtuC) and a solute-binding protein (BtuF).

It localises to the cell inner membrane. Functionally, part of the ABC transporter complex BtuCDF involved in vitamin B12 import. Involved in the translocation of the substrate across the membrane. The sequence is that of Vitamin B12 import system permease protein BtuC from Salmonella enteritidis PT4 (strain P125109).